A 316-amino-acid chain; its full sequence is Transaldolase (316 aa).

Catalysis depends on lysine 132, which acts as the Schiff-base intermediate with substrate.

This sequence belongs to the transaldolase family. Type 1 subfamily. In terms of assembly, homodimer.

It is found in the cytoplasm. It catalyses the reaction D-sedoheptulose 7-phosphate + D-glyceraldehyde 3-phosphate = D-erythrose 4-phosphate + beta-D-fructose 6-phosphate. Its pathway is carbohydrate degradation; pentose phosphate pathway; D-glyceraldehyde 3-phosphate and beta-D-fructose 6-phosphate from D-ribose 5-phosphate and D-xylulose 5-phosphate (non-oxidative stage): step 2/3. Transaldolase is important for the balance of metabolites in the pentose-phosphate pathway. This is Transaldolase from Methylobacillus flagellatus (strain ATCC 51484 / DSM 6875 / VKM B-1610 / KT).